An 84-amino-acid polypeptide reads, in one-letter code: Magnetosome protein MamR (84 aa).

This sequence belongs to the magnetosome MamR family.

It is found in the magnetosome. Its function is as follows. May play a role in controlling magnetite number and size. Coexpression of mamLQRBIEMO in a deletion of the 17 gene mamAB operon restores magnetosome vesicle formation but not magnetite biosynthesis. This chain is Magnetosome protein MamR, found in Magnetospirillum gryphiswaldense (strain DSM 6361 / JCM 21280 / NBRC 15271 / MSR-1).